We begin with the raw amino-acid sequence, 259 residues long: MSVSVIVMGAGGRMGTTITGMVRADGECRLAGVVEREGRREGLEHLGCQVAGTLEELLPGMPDAVVIDFTAPEASVHNARACARHGSGLVIGTTGFTEEQKAELADCALQTPVFWAPNMSVGVNVLLKILPQLVTLLGEQYDLEMVELHHNKKKDSPSGTALRLAECLAEARKWDLDTVANYHREGIIGERPHEEIGIQTIRGGDVVGVHTVYALGPGERIEVTHQAHSRETFAAGAIRAAKWLAQNRPGKLYTMSDML.

NAD(+) is bound by residues 9 to 14 and Glu-35; that span reads GAGGRM. An NADP(+)-binding site is contributed by Arg-36. Residues 92–94 and 116–119 each bind NAD(+); these read GTT and APNM. His-149 functions as the Proton donor/acceptor in the catalytic mechanism. A (S)-2,3,4,5-tetrahydrodipicolinate-binding site is contributed by His-150. Lys-153 (proton donor) is an active-site residue. 159–160 provides a ligand contact to (S)-2,3,4,5-tetrahydrodipicolinate; it reads GT.

Belongs to the DapB family.

It is found in the cytoplasm. It carries out the reaction (S)-2,3,4,5-tetrahydrodipicolinate + NAD(+) + H2O = (2S,4S)-4-hydroxy-2,3,4,5-tetrahydrodipicolinate + NADH + H(+). The catalysed reaction is (S)-2,3,4,5-tetrahydrodipicolinate + NADP(+) + H2O = (2S,4S)-4-hydroxy-2,3,4,5-tetrahydrodipicolinate + NADPH + H(+). Its pathway is amino-acid biosynthesis; L-lysine biosynthesis via DAP pathway; (S)-tetrahydrodipicolinate from L-aspartate: step 4/4. Catalyzes the conversion of 4-hydroxy-tetrahydrodipicolinate (HTPA) to tetrahydrodipicolinate. This chain is 4-hydroxy-tetrahydrodipicolinate reductase, found in Oleidesulfovibrio alaskensis (strain ATCC BAA-1058 / DSM 17464 / G20) (Desulfovibrio alaskensis).